Reading from the N-terminus, the 1013-residue chain is Endosome/lysosome-associated apoptosis and autophagy regulator 1 (1013 aa).

Positions 1 to 41 are cleaved as a signal peptide; the sequence is MAEPGHSHHLSARVRGRTERRIPRLWRLLLWAGTAFQVTQG. Residues 42 to 910 lie on the Extracellular side of the membrane; it reads TGPELHACKE…ICKTIDFWLK (869 aa). Asn153 is a glycosylation site (N-linked (GlcNAc...) asparagine). 3 disulfide bridges follow: Cys278–Cys295, Cys308–Cys330, and Cys311–Cys342. Residues Asn404 and Asn672 are each glycosylated (N-linked (GlcNAc...) asparagine). Residues 656–858 form the MRH domain; sequence NDCTFSRNTP…LWESAAACPL (203 aa). Intrachain disulfides connect Cys658–Cys704, Cys714–Cys739, Cys808–Cys844, and Cys820–Cys856. The helical transmembrane segment at 911–931 threads the bilayer; it reads VGISAGTCTAILLTVLTCYFW. Over 932–1013 the chain is Cytoplasmic; sequence KKNQKLEYKY…TSSGGLDMDL (82 aa).

The protein belongs to the ELAPOR family. As to quaternary structure, interacts with HSPA5; may regulate the function of HSPA5 in apoptosis and cell proliferation. In terms of tissue distribution, expressed in normal endometrium but overexpressed in endometroid tumors.

It is found in the cell membrane. The protein resides in the late endosome membrane. It localises to the golgi apparatus. Its subcellular location is the trans-Golgi network membrane. The protein localises to the lysosome membrane. It is found in the endoplasmic reticulum membrane. Its function is as follows. May protect cells from cell death by inducing cytosolic vacuolization and up-regulating the autophagy pathway. May play a role in apoptosis and cell proliferation through its interaction with HSPA5. This is Endosome/lysosome-associated apoptosis and autophagy regulator 1 from Homo sapiens (Human).